A 101-amino-acid polypeptide reads, in one-letter code: Small ribosomal subunit protein bS6 (101 aa).

This sequence belongs to the bacterial ribosomal protein bS6 family.

In terms of biological role, binds together with bS18 to 16S ribosomal RNA. The protein is Small ribosomal subunit protein bS6 of Nitratidesulfovibrio vulgaris (strain DSM 19637 / Miyazaki F) (Desulfovibrio vulgaris).